Here is a 361-residue protein sequence, read N- to C-terminus: Homocitrate synthase (361 aa).

Positions 1 to 251 constitute a Pyruvate carboxyltransferase domain; the sequence is MVLDSTLREG…KYRLDLLYRV (251 aa). Arg-8 contributes to the 2-oxoglutarate binding site. Glu-9 contacts Mg(2+). 3 residues coordinate 2-oxoglutarate: His-68, Arg-128, and Thr-162. Mg(2+) contacts are provided by His-188 and His-190. The Proton acceptor role is filled by His-282.

Belongs to the alpha-IPM synthase/homocitrate synthase family. Homocitrate synthase LYS20/LYS21 subfamily. Mg(2+) is required as a cofactor. Requires Mn(2+) as cofactor.

It catalyses the reaction acetyl-CoA + 2-oxoglutarate + H2O = (2R)-homocitrate + CoA + H(+). The protein operates within amino-acid biosynthesis; L-lysine biosynthesis via AAA pathway; L-alpha-aminoadipate from 2-oxoglutarate: step 1/5. In terms of biological role, catalyzes the aldol-type condensation of 2-oxoglutarate with acetyl-CoA to yield homocitrate. Carries out the first step of the alpha-aminoadipate (AAA) lysine biosynthesis pathway. This Pyrococcus abyssi (strain GE5 / Orsay) protein is Homocitrate synthase.